The following is a 525-amino-acid chain: Keratin, type I cytoskeletal 24 (525 aa).

Residues 1-30 (MSCSSRASSSRAGGSSSARVSAGGSSFSSG) form a disordered region. Residues 1 to 139 (MSCSSRASSS…VGDGGLFSGG (139 aa)) are head. The coil 1A stretch occupies residues 140 to 175 (EKQTMQNLNDRLANYLDKVRALEEANTDLENKIKEW). An IF rod domain is found at 140-456 (EKQTMQNLND…RLLDGEGGGS (317 aa)). A linker 1 region spans residues 176–198 (YDKYGPGSGDGGSGRDYSKYYSI). The coil 1B stretch occupies residues 199–290 (IEDLRNQIIA…KNHEEEMKNM (92 aa)). Positions 291–313 (QGSSGGEVTVEMNAAPGTDLTKL) are linker 12. The interval 314–452 (LNDMRAQYEE…ETYRRLLDGE (139 aa)) is coil 2. The tail stretch occupies residues 453-525 (GGGSSFAEFG…VSSISEVKVK (73 aa)). The segment at 459–497 (AEFGGRNSGSVNMGSRDLVSGDSRSGSCSGQGRDSSKTR) is disordered. Residues 480-491 (DSRSGSCSGQGR) are compositionally biased toward polar residues.

It belongs to the intermediate filament family. In terms of assembly, heterotetramer of two type I and two type II keratins. In terms of tissue distribution, highly expressed in keratinocytes, placenta, colon and spleen. Expressed at lower level in thymus and testis.

The chain is Keratin, type I cytoskeletal 24 (KRT24) from Homo sapiens (Human).